Reading from the N-terminus, the 385-residue chain is tRNA-specific 2-thiouridylase MnmA (385 aa).

Residues 29 to 36 and L55 each bind ATP; that span reads GLSGGVDS. The active-site Nucleophile is the C116. A disulfide bridge links C116 with C225. Residue G141 participates in ATP binding. The interval 175–177 is interaction with tRNA; that stretch reads KDQ. The active-site Cysteine persulfide intermediate is C225. Positions 330–331 are interaction with tRNA; that stretch reads RY.

This sequence belongs to the MnmA/TRMU family.

It localises to the cytoplasm. It carries out the reaction S-sulfanyl-L-cysteinyl-[protein] + uridine(34) in tRNA + AH2 + ATP = 2-thiouridine(34) in tRNA + L-cysteinyl-[protein] + A + AMP + diphosphate + H(+). In terms of biological role, catalyzes the 2-thiolation of uridine at the wobble position (U34) of tRNA, leading to the formation of s(2)U34. The protein is tRNA-specific 2-thiouridylase MnmA of Prochlorococcus marinus (strain MIT 9301).